We begin with the raw amino-acid sequence, 599 residues long: Elongation factor 4 (599 aa).

The region spanning 2–184 (NHIRNFSIIA…RLVRDIPAPE (183 aa)) is the tr-type G domain. Residues 14–19 (DHGKST) and 131–134 (NKID) each bind GTP.

Belongs to the TRAFAC class translation factor GTPase superfamily. Classic translation factor GTPase family. LepA subfamily.

It localises to the cell inner membrane. The enzyme catalyses GTP + H2O = GDP + phosphate + H(+). Functionally, required for accurate and efficient protein synthesis under certain stress conditions. May act as a fidelity factor of the translation reaction, by catalyzing a one-codon backward translocation of tRNAs on improperly translocated ribosomes. Back-translocation proceeds from a post-translocation (POST) complex to a pre-translocation (PRE) complex, thus giving elongation factor G a second chance to translocate the tRNAs correctly. Binds to ribosomes in a GTP-dependent manner. This Yersinia pestis (strain Pestoides F) protein is Elongation factor 4.